We begin with the raw amino-acid sequence, 250 residues long: 3-deoxy-manno-octulosonate cytidylyltransferase (250 aa).

This sequence belongs to the KdsB family.

It is found in the cytoplasm. It carries out the reaction 3-deoxy-alpha-D-manno-oct-2-ulosonate + CTP = CMP-3-deoxy-beta-D-manno-octulosonate + diphosphate. Its pathway is nucleotide-sugar biosynthesis; CMP-3-deoxy-D-manno-octulosonate biosynthesis; CMP-3-deoxy-D-manno-octulosonate from 3-deoxy-D-manno-octulosonate and CTP: step 1/1. The protein operates within bacterial outer membrane biogenesis; lipopolysaccharide biosynthesis. In terms of biological role, activates KDO (a required 8-carbon sugar) for incorporation into bacterial lipopolysaccharide in Gram-negative bacteria. This chain is 3-deoxy-manno-octulosonate cytidylyltransferase, found in Francisella tularensis subsp. holarctica (strain FTNF002-00 / FTA).